Reading from the N-terminus, the 371-residue chain is tRNA-specific 2-thiouridylase MnmA (371 aa).

Residues 13–20 (GMSGGVDS) and methionine 39 contribute to the ATP site. Residues 99–101 (NPD) form an interaction with target base in tRNA region. Cysteine 104 acts as the Nucleophile in catalysis. Cysteine 104 and cysteine 200 are joined by a disulfide. Glycine 128 provides a ligand contact to ATP. The interval 150–152 (KDQ) is interaction with tRNA. The Cysteine persulfide intermediate role is filled by cysteine 200. Residues 308–309 (RY) are interaction with tRNA.

Belongs to the MnmA/TRMU family.

It localises to the cytoplasm. The catalysed reaction is S-sulfanyl-L-cysteinyl-[protein] + uridine(34) in tRNA + AH2 + ATP = 2-thiouridine(34) in tRNA + L-cysteinyl-[protein] + A + AMP + diphosphate + H(+). Functionally, catalyzes the 2-thiolation of uridine at the wobble position (U34) of tRNA, leading to the formation of s(2)U34. The sequence is that of tRNA-specific 2-thiouridylase MnmA from Bacillus cytotoxicus (strain DSM 22905 / CIP 110041 / 391-98 / NVH 391-98).